A 681-amino-acid polypeptide reads, in one-letter code: PTS system glucose-specific EIICBA component (681 aa).

One can recognise a PTS EIIC type-1 domain in the interval 3 to 414 (KKLFGQLQRI…LKYKTPGRED (412 aa)). The next 10 helical transmembrane spans lie at 16–36 (LMLPVAILPAAGLLLAIGTAI), 73–93 (MIFALGVAIGLAGGDGVAAIA), 126–146 (ILGIPTLQTGVFGGIIIGALA), 170–190 (FVPIMMATTSFILAFPMALIW), 199–219 (AFSTGLLDSNTGVAVFLFGFI), 273–293 (FMQGEFPVMMFGLPAAALAIY), 303–323 (VVAGLMGSAALTSFLTGITEP), 328–348 (FLFVAPLLFFIHAVLDGLSFL), 355–375 (VHLGYTFSGGFIDYVLLGVLP), and 383–403 (VIPVGLVYAVIYYFVFRFLIV). The PTS EIIB type-1 domain maps to 425-506 (TELPYAVLEA…QQIMNGQVVE (82 aa)). The active-site Phosphocysteine intermediate; for EIIB activity is cysteine 447. The PTS EIIA type-1 domain occupies 551–655 (DQVFSEKMMG…SDITPIIVTQ (105 aa)). Residue histidine 603 is the Tele-phosphohistidine intermediate; for EIIA activity of the active site.

It is found in the cell membrane. It catalyses the reaction N(pros)-phospho-L-histidyl-[protein] + D-glucose(out) = D-glucose 6-phosphate(in) + L-histidyl-[protein]. In terms of biological role, the phosphoenolpyruvate-dependent sugar phosphotransferase system (sugar PTS), a major carbohydrate active transport system, catalyzes the phosphorylation of incoming sugar substrates concomitantly with their translocation across the cell membrane. This system is involved in glucose transport. This Staphylococcus aureus (strain JH9) protein is PTS system glucose-specific EIICBA component (ptsG).